Consider the following 30-residue polypeptide: Cyclotide hyen-E (30 aa).

The cyclopeptide (Gly-Asn) cross-link spans 1-30 (GVPCGESCVYIPCFTGIINCSCRDKVCYNN). Disulfide bonds link Cys4–Cys20, Cys8–Cys22, and Cys13–Cys27.

In terms of processing, this is a cyclic peptide. Detected in stems (at protein level).

In terms of biological role, probably participates in a plant defense mechanism. Has cytotoxic activity against HUVEC cells (LC(50)= 2.17 uM) and various cancer cells including HeLa (LC(50)= 3.05 uM), MCF-7 and K562. Displays very weak hemolytic activity. Binds to and induces leakage in phospholipd membranes, particularly ones containing 1-palmitoyl-2-oleophosphatidylethanolamine (POPE). This Pigea enneasperma (Spade flower) protein is Cyclotide hyen-E.